We begin with the raw amino-acid sequence, 345 residues long: MKFNAAHYLLPLLPALVLSTRQDYEELEKQLKEVFKERSTVLRQLTKTSRELDGIKVNLQSLKNDEQSSKTDVQKLLELGQRQREEMKSLQEALQNQLKETSEKAEKHQATINFLKTEVERKSKMIRDLQNENKSLKNKLLSGSKLCGIHAEESKKIQAQLKELRYGKKDLLFKAQQLTELEQKLAVAKNELEKAALDRESQMKAMKETVQLCLSSVFRDQPPPLSLMPSNPTQMLHPPRTVASRIPEARTKSKPQPSSPGHHDSSQVQATKEESRRPSVCGPQDEGSSCLVKHEEGPQSNSTAESELTTQKLQMPICSECEEKKGPENPSASFDGTPAREEKLL.

Residues 1–19 (MKFNAAHYLLPLLPALVLS) form the signal peptide. Residues 16–211 (LVLSTRQDYE…QMKAMKETVQ (196 aa)) adopt a coiled-coil conformation. An N-linked (GlcNAc...) asparagine glycan is attached at N133. The interval 164–192 (LRYGKKDLLFKAQQLTELEQKLAVAKNEL) is leucine-zipper. The disordered stretch occupies residues 223–345 (PPLSLMPSNP…GTPAREEKLL (123 aa)). Basic and acidic residues predominate over residues 261–277 (GHHDSSQVQATKEESRR). Over residues 298-313 (PQSNSTAESELTTQKL) the composition is skewed to polar residues. N301 carries an N-linked (GlcNAc...) asparagine glycan.

In terms of tissue distribution, expression found only in the brain and spinal cord.

It localises to the secreted. The polypeptide is Leucine zipper protein 2 (Luzp2) (Mus musculus (Mouse)).